Consider the following 232-residue polypeptide: Protein INAPERTURATE POLLEN 1 homolog (232 aa).

As to quaternary structure, interacts with LECRKS7/DAF1.

The protein resides in the cytoplasm. Functionally, required for pollen aperture formation, male fertility and LECRKS7/DAF1 function. Seems to be involved in operculum protrusion. Participates in the modification of plasma membrane at future aperture sites, possibly by creating close contact between the plasma membrane and callose wall to prevent primexine formation and sporopollenin deposition. The chain is Protein INAPERTURATE POLLEN 1 homolog from Oryza sativa subsp. japonica (Rice).